A 167-amino-acid chain; its full sequence is Endoribonuclease YbeY (167 aa).

Residues H131, H135, and H141 each coordinate Zn(2+).

The protein belongs to the endoribonuclease YbeY family. Requires Zn(2+) as cofactor.

The protein resides in the cytoplasm. Its function is as follows. Single strand-specific metallo-endoribonuclease involved in late-stage 70S ribosome quality control and in maturation of the 3' terminus of the 16S rRNA. This is Endoribonuclease YbeY from Rickettsia africae (strain ESF-5).